The following is a 374-amino-acid chain: Queuine tRNA-ribosyltransferase (374 aa).

Aspartate 89 functions as the Proton acceptor in the catalytic mechanism. Substrate contacts are provided by residues 89 to 93 (DSGGF), aspartate 143, glutamine 185, and glycine 212. The RNA binding stretch occupies residues 243-249 (GVGKPED). Aspartate 262 acts as the Nucleophile in catalysis. Positions 267–271 (TRNAR) are RNA binding; important for wobble base 34 recognition. Zn(2+) is bound by residues cysteine 300, cysteine 302, cysteine 305, and histidine 331.

It belongs to the queuine tRNA-ribosyltransferase family. In terms of assembly, homodimer. Within each dimer, one monomer is responsible for RNA recognition and catalysis, while the other monomer binds to the replacement base PreQ1. Zn(2+) is required as a cofactor.

The enzyme catalyses 7-aminomethyl-7-carbaguanine + guanosine(34) in tRNA = 7-aminomethyl-7-carbaguanosine(34) in tRNA + guanine. The protein operates within tRNA modification; tRNA-queuosine biosynthesis. Functionally, catalyzes the base-exchange of a guanine (G) residue with the queuine precursor 7-aminomethyl-7-deazaguanine (PreQ1) at position 34 (anticodon wobble position) in tRNAs with GU(N) anticodons (tRNA-Asp, -Asn, -His and -Tyr). Catalysis occurs through a double-displacement mechanism. The nucleophile active site attacks the C1' of nucleotide 34 to detach the guanine base from the RNA, forming a covalent enzyme-RNA intermediate. The proton acceptor active site deprotonates the incoming PreQ1, allowing a nucleophilic attack on the C1' of the ribose to form the product. After dissociation, two additional enzymatic reactions on the tRNA convert PreQ1 to queuine (Q), resulting in the hypermodified nucleoside queuosine (7-(((4,5-cis-dihydroxy-2-cyclopenten-1-yl)amino)methyl)-7-deazaguanosine). This Saccharophagus degradans (strain 2-40 / ATCC 43961 / DSM 17024) protein is Queuine tRNA-ribosyltransferase.